The primary structure comprises 85 residues: Protein BTH_I0359 (85 aa).

This is Protein BTH_I0359 from Burkholderia thailandensis (strain ATCC 700388 / DSM 13276 / CCUG 48851 / CIP 106301 / E264).